Here is a 529-residue protein sequence, read N- to C-terminus: Variant surface glycoprotein MITAT 1.6 (529 aa).

Residues 1–24 (MAVHRALAAYAISLYVLLPRKSGA) form the signal peptide. Cystine bridges form between Cys-39–Cys-170 and Cys-147–Cys-214. Asn-456 carries an N-linked (GlcNAc...) (high mannose) asparagine glycan. Residue Asp-506 is the site of GPI-anchor amidated aspartate attachment. A propeptide spans 507 to 529 (SSILVTKKFALTVVSAAFVALLF) (removed in mature form).

In terms of processing, N-glycosylated; glycan is composed of 6 to 9 mannose residues.

It is found in the cell membrane. Its function is as follows. VSG forms a coat on the surface of the parasite. The trypanosome evades the immune response of the host by expressing a series of antigenically distinct VSGs from an estimated 1000 VSG genes. This Trypanosoma brucei brucei protein is Variant surface glycoprotein MITAT 1.6.